Consider the following 121-residue polypeptide: Protein TusC (121 aa).

The protein belongs to the DsrF/TusC family. In terms of assembly, heterohexamer, formed by a dimer of trimers. The hexameric TusBCD complex contains 2 copies each of TusB, TusC and TusD. The TusBCD complex interacts with TusE.

It localises to the cytoplasm. Its function is as follows. Part of a sulfur-relay system required for 2-thiolation of 5-methylaminomethyl-2-thiouridine (mnm(5)s(2)U) at tRNA wobble positions. This is Protein TusC from Yersinia enterocolitica serotype O:8 / biotype 1B (strain NCTC 13174 / 8081).